Here is a 173-residue protein sequence, read N- to C-terminus: ATP synthase subunit b (173 aa).

The helical transmembrane segment at 15 to 35 threads the bilayer; the sequence is LYVGDMLFYAILFIVLMALIA.

Belongs to the ATPase B chain family. In terms of assembly, F-type ATPases have 2 components, F(1) - the catalytic core - and F(0) - the membrane proton channel. F(1) has five subunits: alpha(3), beta(3), gamma(1), delta(1), epsilon(1). F(0) has three main subunits: a(1), b(2) and c(10-14). The alpha and beta chains form an alternating ring which encloses part of the gamma chain. F(1) is attached to F(0) by a central stalk formed by the gamma and epsilon chains, while a peripheral stalk is formed by the delta and b chains.

The protein resides in the cell membrane. Its function is as follows. F(1)F(0) ATP synthase produces ATP from ADP in the presence of a proton or sodium gradient. F-type ATPases consist of two structural domains, F(1) containing the extramembraneous catalytic core and F(0) containing the membrane proton channel, linked together by a central stalk and a peripheral stalk. During catalysis, ATP synthesis in the catalytic domain of F(1) is coupled via a rotary mechanism of the central stalk subunits to proton translocation. Functionally, component of the F(0) channel, it forms part of the peripheral stalk, linking F(1) to F(0). This is ATP synthase subunit b from Pediococcus pentosaceus (strain ATCC 25745 / CCUG 21536 / LMG 10740 / 183-1w).